A 101-amino-acid chain; its full sequence is Urease subunit beta (101 aa).

It belongs to the urease beta subunit family. Heterotrimer of UreA (gamma), UreB (beta) and UreC (alpha) subunits. Three heterotrimers associate to form the active enzyme.

The protein resides in the cytoplasm. The enzyme catalyses urea + 2 H2O + H(+) = hydrogencarbonate + 2 NH4(+). Its pathway is nitrogen metabolism; urea degradation; CO(2) and NH(3) from urea (urease route): step 1/1. In Pseudomonas fluorescens (strain ATCC BAA-477 / NRRL B-23932 / Pf-5), this protein is Urease subunit beta.